The following is a 932-amino-acid chain: Protocadherin gamma-A3 (932 aa).

Residues 1–29 (MTNCLSFRNGRGLALLCALLGTLCETGSG) form the signal peptide. Cadherin domains follow at residues 30–133 (QIRY…APNF), 134–242 (PTEE…PPMF), 243–347 (TQPE…APEI), 348–452 (TITS…PPTF), 453–562 (PHLS…APEI), and 570–682 (DGST…EPSA). The Extracellular portion of the chain corresponds to 30-692 (QIRYSVSEEL…KPNDSDLTLY (663 aa)). N265, N419, and N545 each carry an N-linked (GlcNAc...) asparagine glycan. N-linked (GlcNAc...) asparagine glycosylation is present at N685. A helical transmembrane segment spans residues 693-713 (LVVAVAAVSCVFLAFVIVLLA). Topologically, residues 714 to 932 (LRLRRWHKSR…KKKSGKKEKK (219 aa)) are cytoplasmic. 2 disordered regions span residues 805–841 (NLLQQAPPNTDWRFSQAQRPGTSGSQNGDDTGTWPNN) and 902–932 (ATLTNAAGKRDGKAPAGGNGNKKKSGKKEKK). Basic residues predominate over residues 922-932 (NKKKSGKKEKK).

It is found in the cell membrane. Functionally, potential calcium-dependent cell-adhesion protein. May be involved in the establishment and maintenance of specific neuronal connections in the brain. The protein is Protocadherin gamma-A3 (PCDHGA3) of Homo sapiens (Human).